Here is a 636-residue protein sequence, read N- to C-terminus: Epithelial sodium channel subunit alpha (636 aa).

The tract at residues 1–28 (MKSENQPEDKRIGKLKREANMQKMKEAA) is disordered. The Cytoplasmic segment spans residues 1 to 77 (MKSENQPEDK…VCSKKNRMKT (77 aa)). A helical membrane pass occupies residues 78 to 98 (AFWSILFFFTFGLMYWQFGII). Residues 99–549 (YREYFSFPVN…SQWSLWFGSS (451 aa)) lie on the Extracellular side of the membrane. Disulfide bonds link Cys-126-Cys-293, Cys-218-Cys-225, Cys-270-Cys-277, Cys-381-Cys-466, Cys-403-Cys-443, Cys-403-Cys-462, Cys-407-Cys-458, Cys-416-Cys-443, Cys-416-Cys-466, and Cys-418-Cys-432. A helical membrane pass occupies residues 550 to 570 (VLSVVELVELILDFIAITCIL). Topologically, residues 571–636 (AIHWLNMNRS…LRRVSSQQTE (66 aa)) are cytoplasmic.

It belongs to the amiloride-sensitive sodium channel (TC 1.A.6) family. SCNN1A subfamily. In terms of assembly, heterotrimer; containing an alpha/SCNN1A, a beta/SCNN1B and a gamma/SCNN1G subunit.

The protein resides in the apical cell membrane. Its subcellular location is the cell projection. It localises to the cilium. It is found in the cytoplasmic granule. The protein localises to the cytoplasm. The protein resides in the cytoplasmic vesicle. Its subcellular location is the secretory vesicle. It localises to the acrosome. It is found in the flagellum. The enzyme catalyses Na(+)(in) = Na(+)(out). Its activity is regulated as follows. Originally identified and characterized by its inhibition by the diuretic drug amiloride. In terms of biological role, this is one of the three pore-forming subunits of the heterotrimeric epithelial sodium channel (ENaC), a critical regulator of sodium balance and fluid homeostasis. ENaC operates in epithelial tissues, where it mediates the electrodiffusion of sodium ions from extracellular fluid through the apical membrane of cells, with water following osmotically. The protein is Epithelial sodium channel subunit alpha of Anolis carolinensis (Green anole).